The primary structure comprises 1508 residues: ABC-type transporter oblD (1508 aa).

2 disordered regions span residues 1–35 (MSLGPGGFEATPNSVMPSDASLHNQSHHTDSLTNN) and 54–82 (KYTQNSVYSTTSQNPFAAEPGSKLDPNGG). Polar residues predominate over residues 11-24 (TPNSVMPSDASLHN). 2 N-linked (GlcNAc...) asparagine glycosylation sites follow: asparagine 24 and asparagine 35. Positions 55–68 (YTQNSVYSTTSQNP) are enriched in polar residues. 3 N-linked (GlcNAc...) asparagine glycosylation sites follow: asparagine 83, asparagine 231, and asparagine 314. Residues 136–390 (LEAVGLVRKL…FLNMGFVCPD (255 aa)) enclose the ABC transporter 1 domain. 5 consecutive transmembrane segments (helical) span residues 501-521 (ITISSAMGNAIIALIISSMFF), 536-556 (LLFFAIVINAFSSGLEMLTLY), 610-630 (GNFFFFVFTSFVLTLTMSMFF), 643-663 (ALPFAAILITGLTMYTGFTIP), and 752-772 (GIIFAFMVILCAIYLVASDFI). Residues 828-1070 (FQWKDICYDI…ILIDYFTRNG (243 aa)) form the ABC transporter 2 domain. 864 to 871 (GVSGAGKT) serves as a coordination point for ATP. A run of 4 helical transmembrane segments spans residues 1172–1192 (YIYSKAFLCVSTSLYVGFSLY), 1206–1226 (FAIFTLFFLFGQFIQQIMPHF), 1296–1316 (LFVWVFLMFASTFAHFMIAAL), and 1322–1342 (AGNMGNLLFTLCVIFCGILTT). Asparagine 1390 is a glycosylation site (N-linked (GlcNAc...) asparagine). Residues 1443–1463 (FGLMWVFVVFNAFAACGLYYW) traverse the membrane as a helical segment.

The protein belongs to the ABC transporter superfamily. ABCG family. PDR (TC 3.A.1.205) subfamily.

The protein localises to the cell membrane. Functionally, ABC-type transporter; part of the gene cluster that mediates the biosynthesis of the sesterterpenes ophiobolins, fungal phytotoxins with potential anti-cancer activities. Acts as a specific transporter involved in ophiobolins secretion. The protein is ABC-type transporter oblD of Cochliobolus heterostrophus (strain C5 / ATCC 48332 / race O) (Southern corn leaf blight fungus).